The following is a 322-amino-acid chain: DNA repair and recombination protein RadA (322 aa).

An ATP-binding site is contributed by 105-112 (GMFGSGKT).

It belongs to the eukaryotic RecA-like protein family.

Functionally, involved in DNA repair and in homologous recombination. Binds and assemble on single-stranded DNA to form a nucleoprotein filament. Hydrolyzes ATP in a ssDNA-dependent manner and promotes DNA strand exchange between homologous DNA molecules. The protein is DNA repair and recombination protein RadA of Methanococcus maripaludis (Methanococcus deltae).